Reading from the N-terminus, the 180-residue chain is ATP-dependent protease subunit HslV (180 aa).

Residue Thr5 is part of the active site. Residues Gly165, Cys168, and Thr171 each contribute to the Na(+) site.

It belongs to the peptidase T1B family. HslV subfamily. A double ring-shaped homohexamer of HslV is capped on each side by a ring-shaped HslU homohexamer. The assembly of the HslU/HslV complex is dependent on binding of ATP.

It is found in the cytoplasm. It catalyses the reaction ATP-dependent cleavage of peptide bonds with broad specificity.. With respect to regulation, allosterically activated by HslU binding. Its function is as follows. Protease subunit of a proteasome-like degradation complex believed to be a general protein degrading machinery. This is ATP-dependent protease subunit HslV from Helicobacter pylori (strain P12).